Reading from the N-terminus, the 539-residue chain is Protein lin-14 (539 aa).

2 disordered regions span residues 162–230 (PTLP…SNHS) and 262–293 (ETAP…PRKP). 2 stretches are compositionally biased toward polar residues: residues 163–183 (TLPN…GTDD) and 193–214 (SVDS…NQNI). Residues 274–284 (NGTTNGTAKAG) are compositionally biased toward low complexity. The interval 296 to 440 (DDIVKIVRNQ…CRRVRHAKKT (145 aa)) is involved in sequence-specific DNA-binding.

Cleaved by caspase ced-3 in vitro. In terms of tissue distribution, high levels in hypodermal, intestinal, body wall muscle, nerve ring, and ventral nerve cord cells of embryos and L1 animals.

The protein localises to the nucleus. Its function is as follows. Heterochronic protein which controls the choice of stage specific cell fates. Involved in the temporal progression of vulval fate patterning, possibly by inhibiting lin-12. Acts as a transcription factor involved in the stage-specific repression of various genes, including insulin/insulin-like growth factor gene ins-33 and neuropeptide-encoding gene nlp-45. Binds to the consensus sequence 5'-[CT]GGA[AG]-3' in the regulatory elements of target genes. Plays a role in governing the developmental timing of male tail tip morphogenesis. Plays a role in controlling the timing of seam cell development during the larval stages. Plays a role in promoting survival at high temperatures in larvae. Involved in maintenance of the architecture of the ventral nerve cord, perhaps acting via modulating expression of the immunoglobulin domain gene zig-4. May specify L2 and later cell fates, creating a temporal switch. In terms of biological role, may be involved in specifying L1 cell fates. The sequence is that of Protein lin-14 from Caenorhabditis elegans.